Consider the following 880-residue polypeptide: DNA double-strand break repair Rad50 ATPase (880 aa).

ATP-binding positions include Arg-12, 32 to 38 (NGSGKSS), and Gln-138. Coiled coils occupy residues 225–336 (GELE…VIKE) and 391–744 (GEVI…QALN). Residues 397–494 (LESLEKERTE…NLRKLEIKLR (98 aa)) form the Zinc-hook domain. Residues Cys-442 and Cys-445 each coordinate Zn(2+). Residue 789-794 (FLSGGE) coordinates ATP.

The protein belongs to the SMC family. RAD50 subfamily. As to quaternary structure, homodimer. Forms a heterotetramer composed of two Mre11 subunits and two Rad50 subunits. Requires Zn(2+) as cofactor.

Functionally, part of the Rad50/Mre11 complex, which is involved in the early steps of DNA double-strand break (DSB) repair. The complex may facilitate opening of the processed DNA ends to aid in the recruitment of HerA and NurA. Rad50 controls the balance between DNA end bridging and DNA resection via ATP-dependent structural rearrangements of the Rad50/Mre11 complex. The sequence is that of DNA double-strand break repair Rad50 ATPase from Pyrococcus abyssi (strain GE5 / Orsay).